A 63-amino-acid polypeptide reads, in one-letter code: Parvalbumin alpha (63 aa).

EF-hand domains are found at residues 28 to 38 and 39 to 63; these read IEEEELGLILK and VLLA…LVSE. Ca(2+) contacts are provided by Glu29, Glu32, Asp45, Asp47, Asp49, Lys51, and Glu56.

Detected in muscle and cutaneous mucus. In the skin, detected in cells in the basal region of the glandular epithelium of the dermal mucus glands (at protein level).

The protein resides in the cytoplasm. It localises to the secreted. Its function is as follows. In muscle, parvalbumin is thought to be involved in relaxation after contraction. It binds two calcium ions. This is Parvalbumin alpha from Rana temporaria (European common frog).